A 325-amino-acid polypeptide reads, in one-letter code: E3 ubiquitin-protein ligase EL5 (325 aa).

The disordered stretch occupies residues 1–29 (MVRGVEQGGPAMDESSSSSSPSPVSAPAG). The span at 15–28 (SSSSSSPSPVSAPA) shows a compositional bias: low complexity. A helical membrane pass occupies residues 38–58 (IATVAAVLIVFAALTLAFVLL). Positions 70–105 (TTTSTSGRGRRPRPRRRSGSGGDGGTGGGVDPEVLR) are disordered. The span at 77–87 (RGRRPRPRRRS) shows a compositional bias: basic residues. A compositionally biased stretch (gly residues) spans 88 to 99 (GSGGDGGTGGGV). The RING-type; atypical zinc-finger motif lies at 134–176 (CAVCLAELEDGEEARFLPRCGHGFHAECVDMWLGSHSTCPLCR). 2 disordered regions span residues 267-289 (GAAG…GDVE) and 303-325 (AATP…HVRN). Positions 268 to 281 (AAGSTSSCSCATGG) are enriched in low complexity.

The protein resides in the cell membrane. The catalysed reaction is S-ubiquitinyl-[E2 ubiquitin-conjugating enzyme]-L-cysteine + [acceptor protein]-L-lysine = [E2 ubiquitin-conjugating enzyme]-L-cysteine + N(6)-ubiquitinyl-[acceptor protein]-L-lysine.. It functions in the pathway protein modification; protein ubiquitination. Functionally, functions as an E3 ubiquitin-protein ligase in cooperation with the E2 ubiquitin conjugating enzymes UBC5A and UBC5B. Involved in root development. Required for the maintenance of cell viability after the initiation of root primordial formation. May mediate the degradation of cytotoxic proteins produced in root cells after the actions of auxin, cytokinin and jasmonic acid. Mediates 'Lys-48'-linked polyubiquitination of MBP in vitro. This Oryza sativa subsp. japonica (Rice) protein is E3 ubiquitin-protein ligase EL5 (EL5.1).